Here is a 321-residue protein sequence, read N- to C-terminus: Peroxidase 28 (321 aa).

Residues 1–21 (MKIATFSVLLLLLFIFPVALA) form the signal peptide. 4 disulfide bridges follow: Cys-32–Cys-111, Cys-65–Cys-70, Cys-117–Cys-317, and Cys-196–Cys-228. Catalysis depends on His-63, which acts as the Proton acceptor. Positions 64, 67, 69, 71, and 73 each coordinate Ca(2+). Pro-159 is a binding site for substrate. Residue His-189 coordinates heme b. Residue Thr-190 participates in Ca(2+) binding. Positions 238, 244, and 249 each coordinate Ca(2+).

The protein belongs to the peroxidase family. Classical plant (class III) peroxidase subfamily. Heme b is required as a cofactor. The cofactor is Ca(2+).

The protein resides in the secreted. The enzyme catalyses 2 a phenolic donor + H2O2 = 2 a phenolic radical donor + 2 H2O. Its function is as follows. Removal of H(2)O(2), oxidation of toxic reductants, biosynthesis and degradation of lignin, suberization, auxin catabolism, response to environmental stresses such as wounding, pathogen attack and oxidative stress. These functions might be dependent on each isozyme/isoform in each plant tissue. This Arabidopsis thaliana (Mouse-ear cress) protein is Peroxidase 28 (PER28).